The primary structure comprises 477 residues: AAA-ATPase At3g28600 (477 aa).

The signal sequence occupies residues 1–26; it reads MMMGNTFGSSLASLFFLWATIQQIFP. Residue 245 to 252 coordinates ATP; that stretch reads GPPGTGKS.

Belongs to the AAA ATPase family. BCS1 subfamily. The cofactor is Mg(2+).

The catalysed reaction is ATP + H2O = ADP + phosphate + H(+). This is AAA-ATPase At3g28600 from Arabidopsis thaliana (Mouse-ear cress).